A 121-amino-acid chain; its full sequence is Small ribosomal subunit protein uS13 (121 aa).

Residues glycine 88–lysine 121 form a disordered region. Positions alanine 106–lysine 121 are enriched in basic residues.

It belongs to the universal ribosomal protein uS13 family. As to quaternary structure, part of the 30S ribosomal subunit. Forms a loose heterodimer with protein S19. Forms two bridges to the 50S subunit in the 70S ribosome.

In terms of biological role, located at the top of the head of the 30S subunit, it contacts several helices of the 16S rRNA. In the 70S ribosome it contacts the 23S rRNA (bridge B1a) and protein L5 of the 50S subunit (bridge B1b), connecting the 2 subunits; these bridges are implicated in subunit movement. Contacts the tRNAs in the A and P-sites. The chain is Small ribosomal subunit protein uS13 from Lactococcus lactis subsp. cremoris (strain MG1363).